Consider the following 86-residue polypeptide: Large ribosomal subunit protein uL23 (86 aa).

It belongs to the universal ribosomal protein uL23 family. Part of the 50S ribosomal subunit. Contacts protein L29.

Its function is as follows. Binds to 23S rRNA. One of the proteins that surrounds the polypeptide exit tunnel on the outside of the ribosome. This Pyrococcus furiosus (strain ATCC 43587 / DSM 3638 / JCM 8422 / Vc1) protein is Large ribosomal subunit protein uL23.